Here is a 182-residue protein sequence, read N- to C-terminus: ATP-dependent protease subunit HslV (182 aa).

Residue threonine 12 is part of the active site. Residues alanine 167, cysteine 170, and threonine 173 each contribute to the Na(+) site.

This sequence belongs to the peptidase T1B family. HslV subfamily. A double ring-shaped homohexamer of HslV is capped on each side by a ring-shaped HslU homohexamer. The assembly of the HslU/HslV complex is dependent on binding of ATP.

It localises to the cytoplasm. It catalyses the reaction ATP-dependent cleavage of peptide bonds with broad specificity.. Allosterically activated by HslU binding. Protease subunit of a proteasome-like degradation complex believed to be a general protein degrading machinery. This Paramagnetospirillum magneticum (strain ATCC 700264 / AMB-1) (Magnetospirillum magneticum) protein is ATP-dependent protease subunit HslV.